The chain runs to 1716 residues: Histone-lysine N-methyltransferase SETD1A (1716 aa).

Residues leucine 60–glycine 89 are interaction with WDR82. Positions aspartate 84–lysine 172 constitute an RRM domain. Disordered regions lie at residues proline 194–proline 367, threonine 380–serine 499, phenylalanine 516–histidine 670, alanine 849–lysine 869, lysine 911–valine 1206, glutamate 1230–valine 1259, and glycine 1275–proline 1297. Residues serine 222–threonine 231 show a composition bias toward low complexity. A compositionally biased stretch (polar residues) spans cysteine 243 to glycine 277. Composition is skewed to low complexity over residues serine 278–serine 295 and serine 315–serine 357. The segment covering serine 430–proline 440 has biased composition (pro residues). Positions glycine 441–alanine 461 are enriched in gly residues. Phosphoserine is present on serine 477. A compositionally biased stretch (low complexity) spans serine 477–glutamate 487. A compositionally biased stretch (polar residues) spans threonine 488 to serine 499. Phosphoserine is present on residues serine 521 and serine 578. Over residues alanine 581 to serine 591 the composition is skewed to polar residues. Pro residues-rich tracts occupy residues serine 606–tyrosine 631 and glycine 638–histidine 670. A compositionally biased stretch (basic and acidic residues) spans glutamine 859–lysine 869. The residue at position 930 (serine 930) is a Phosphoserine. Composition is skewed to acidic residues over residues lysine 991–valine 1009 and alanine 1018–aspartate 1027. The segment covering serine 1028 to serine 1071 has biased composition (low complexity). At serine 1110 the chain carries Phosphoserine. Residues glutamate 1130–alanine 1150 are compositionally biased toward pro residues. Over residues aspartate 1283–aspartate 1292 the composition is skewed to acidic residues. The HCFC1-binding motif (HBM) motif lies at glutamate 1307 to alanine 1311. Disordered regions lie at residues glutamate 1355–arginine 1427 and threonine 1480–tyrosine 1508. Residues glutamate 1369–serine 1383 are compositionally biased toward acidic residues. Basic residues predominate over residues arginine 1399 to proline 1412. Over residues proline 1413–phenylalanine 1424 the composition is skewed to pro residues. The tract at residues phenylalanine 1424–leucine 1459 is interaction with CFP1. Residues leucine 1459–arginine 1546 are interaction with ASH2L, RBBP5 and WDR5. Residues glycine 1501–glutamate 1506 carry the WDR5 interaction motif (WIN) motif. The short motif at arginine 1546 to arginine 1551 is the RxxxRR motif element. The SET domain maps to lysine 1577–lysine 1694. Residue tyrosine 1693 coordinates S-adenosyl-L-methionine. In terms of domain architecture, Post-SET spans asparagine 1700–asparagine 1716.

This sequence belongs to the class V-like SAM-binding methyltransferase superfamily. Component of the SET1A/COMPASS complex composed of the catalytic subunit SETD1A, WDR5, WDR82, RBBP5, ASH2L/ASH2, CXXC1/CFP1, HCFC1 and DPY30 homotrimer. Forms a core complex with the evolutionary conserved subcomplex WRAD composed of WDR5, RBBP5, ASH2L/ASH2 and DPY30 subunits; WRAD differentially stimulates the methyltransferase activity. Interacts with BOD1L1 (via COMPASS-Shg1 domain) at replication forks. Interacts with HCFC1. Interacts with ASH2/ASH2L. Interacts with CXXC1/CFP1. Interacts with RBBP5. Interacts (via N-terminal region) with WDR82; the interaction is direct. Interacts (via the RRM domain) with hyperphosphorylated C-terminal domain (CTD) of RNA polymerase II large subunit (POLR2A) only in the presence of WDR82. Binds specifically to CTD heptad repeats phosphorylated on 'Ser-5' of each heptad. Interacts with ZNF335. Interacts with SUPT6H. Interacts with NAP1L1. Interacts (via WIN motif) with WDR5.

It is found in the nucleus. Its subcellular location is the nucleus speckle. The protein localises to the chromosome. It localises to the cytoplasm. The enzyme catalyses L-lysyl(4)-[histone H3] + S-adenosyl-L-methionine = N(6)-methyl-L-lysyl(4)-[histone H3] + S-adenosyl-L-homocysteine + H(+). The catalysed reaction is N(6)-methyl-L-lysyl(4)-[histone H3] + S-adenosyl-L-methionine = N(6),N(6)-dimethyl-L-lysyl(4)-[histone H3] + S-adenosyl-L-homocysteine + H(+). It catalyses the reaction N(6),N(6)-dimethyl-L-lysyl(4)-[histone H3] + S-adenosyl-L-methionine = N(6),N(6),N(6)-trimethyl-L-lysyl(4)-[histone H3] + S-adenosyl-L-homocysteine + H(+). Histone methyltransferase that catalyzes methyl group transfer from S-adenosyl-L-methionine to the epsilon-amino group of 'Lys-4' of histone H3 (H3K4) via a non-processive mechanism. Part of chromatin remodeling machinery, forms H3K4me1, H3K4me2 and H3K4me3 methylation marks at active chromatin sites where transcription and DNA repair take place. Responsible for H3K4me3 enriched promoters and transcriptional programming of inner mass stem cells and neuron progenitors during embryogenesis. Required for H3K4me1 mark at stalled replication forks. Mediates FANCD2-dependent nucleosome remodeling and RAD51 nucleofilaments stabilization at reversed forks, protecting them from nucleolytic degradation. Does not methylate 'Lys-4' of histone H3 if the neighboring 'Lys-9' residue is already methylated. Has RNA binding activity towards transcripts involved in RNA processing and the DNA damage response. The chain is Histone-lysine N-methyltransferase SETD1A (Setd1a) from Mus musculus (Mouse).